Reading from the N-terminus, the 1439-residue chain is Mediator of RNA polymerase II transcription subunit 23 (1439 aa).

Residues 282–318 (SQMLNLQKHQKQRYNALEEQLVNLIVQAMEMTEANDA) are a coiled coil. The segment at 358–625 (HIVLALHEKL…HHVPTHYRVQ (268 aa)) is interaction with Hsf. Disordered regions lie at residues 1338 to 1372 (NDNTSNNAITSQTQSPMQTQHQQQPQQPHQQQQQQ) and 1401 to 1439 (SVPLGSGGNLQQQQQINQQQQMYMQHMQQHQHMQNMRHN). Low complexity-rich tracts occupy residues 1348 to 1372 (SQTQSPMQTQHQQQPQQPHQQQQQQ) and 1411 to 1439 (QQQQQINQQQQMYMQHMQQHQHMQNMRHN).

Belongs to the Mediator complex subunit 23 family. As to quaternary structure, component of the Mediator complex. Interacts with Hsf.

Its subcellular location is the nucleus. Its function is as follows. Component of the Mediator complex, a coactivator involved in the regulated transcription of nearly all RNA polymerase II-dependent genes. Mediator functions as a bridge to convey information from gene-specific regulatory proteins to the basal RNA polymerase II transcription machinery. Mediator is recruited to promoters by direct interactions with regulatory proteins and serves as a scaffold for the assembly of a functional preinitiation complex with RNA polymerase II and the general transcription factors. Required for transcriptional activation in response to heat shock. This is Mediator of RNA polymerase II transcription subunit 23 (MED23) from Drosophila melanogaster (Fruit fly).